A 142-amino-acid chain; its full sequence is Galactose-6-phosphate isomerase subunit LacA (142 aa).

This sequence belongs to the LacAB/RpiB family. Heteromultimeric protein consisting of LacA and LacB.

It carries out the reaction aldehydo-D-galactose 6-phosphate = keto-D-tagatose 6-phosphate. It participates in carbohydrate metabolism; D-galactose 6-phosphate degradation; D-tagatose 6-phosphate from D-galactose 6-phosphate: step 1/1. The protein is Galactose-6-phosphate isomerase subunit LacA of Enterococcus faecalis (strain ATCC 700802 / V583).